We begin with the raw amino-acid sequence, 202 residues long: Transcriptional regulator GfcR 2 (202 aa).

Belongs to the purine/pyrimidine phosphoribosyltransferase family. GfcR subfamily.

The protein is Transcriptional regulator GfcR 2 of Methanosarcina barkeri (strain Fusaro / DSM 804).